The sequence spans 276 residues: NADPH-dependent 7-cyano-7-deazaguanine reductase (276 aa).

A substrate-binding site is contributed by 83-85 (IES). 85–86 (SK) contributes to the NADPH binding site. C184 acts as the Thioimide intermediate in catalysis. D191 serves as the catalytic Proton donor. Residue 223–224 (HE) participates in substrate binding. 252 to 253 (RG) serves as a coordination point for NADPH.

This sequence belongs to the GTP cyclohydrolase I family. QueF type 2 subfamily. In terms of assembly, homodimer.

The protein localises to the cytoplasm. The enzyme catalyses 7-aminomethyl-7-carbaguanine + 2 NADP(+) = 7-cyano-7-deazaguanine + 2 NADPH + 3 H(+). Its pathway is tRNA modification; tRNA-queuosine biosynthesis. Its function is as follows. Catalyzes the NADPH-dependent reduction of 7-cyano-7-deazaguanine (preQ0) to 7-aminomethyl-7-deazaguanine (preQ1). The chain is NADPH-dependent 7-cyano-7-deazaguanine reductase from Pseudomonas fluorescens (strain ATCC BAA-477 / NRRL B-23932 / Pf-5).